We begin with the raw amino-acid sequence, 259 residues long: Glucosamine-6-phosphate deaminase (259 aa).

Catalysis depends on aspartate 66, which acts as the Proton acceptor; for enolization step. Aspartate 135 acts as the For ring-opening step in catalysis. Histidine 137 serves as the catalytic Proton acceptor; for ring-opening step. The For ring-opening step role is filled by glutamate 142.

This sequence belongs to the glucosamine/galactosamine-6-phosphate isomerase family. NagB subfamily.

The catalysed reaction is alpha-D-glucosamine 6-phosphate + H2O = beta-D-fructose 6-phosphate + NH4(+). Its pathway is amino-sugar metabolism; N-acetylneuraminate degradation; D-fructose 6-phosphate from N-acetylneuraminate: step 5/5. Functionally, catalyzes the reversible isomerization-deamination of glucosamine 6-phosphate (GlcN6P) to form fructose 6-phosphate (Fru6P) and ammonium ion. The protein is Glucosamine-6-phosphate deaminase of Pseudarthrobacter chlorophenolicus (strain ATCC 700700 / DSM 12829 / CIP 107037 / JCM 12360 / KCTC 9906 / NCIMB 13794 / A6) (Arthrobacter chlorophenolicus).